The following is a 157-amino-acid chain: V-type proton ATPase 16 kDa proteolipid subunit c (157 aa).

The Lumenal portion of the chain corresponds to 1-10 (MALPEENPVY). A helical membrane pass occupies residues 11–33 (GPFFGVMGAAAAIIFSALGAAYG). Residues 34–55 (TAKSGTGIAAMSVMRPELIMKS) are Cytoplasmic-facing. A helical transmembrane segment spans residues 56-76 (IIPVVMAGIIAIYGLVVAVLI). Residues 77–94 (AGSLDTPTKYSLYKGFIH) lie on the Lumenal side of the membrane. The helical transmembrane segment at 95–116 (LGAGLAVGFSGLAAGFAIGIVG) threads the bilayer. Residues 117–128 (DAGVRGTAQQPR) lie on the Cytoplasmic side of the membrane. The helical transmembrane segment at 129–154 (LFVGMILILIFAEVLGLYGLIVAIYL) threads the bilayer. The Lumenal portion of the chain corresponds to 155–157 (YTK).

This sequence belongs to the V-ATPase proteolipid subunit family. In terms of assembly, V-ATPase is a heteromultimeric enzyme made up of two complexes: the ATP-hydrolytic V1 complex and the proton translocation V0 complex. The V1 complex consists of three catalytic AB heterodimers that form a heterohexamer, three peripheral stalks each consisting of EG heterodimers, one central rotor including subunits D and F, and the regulatory subunits C and H. The proton translocation complex V0 consists of the proton transport subunit a, a ring of proteolipid subunits c9c'', rotary subunit d, subunits e and f, and the accessory subunits VhaAC45 and ATP6AP2.

Its subcellular location is the membrane. In terms of biological role, proton-conducting pore forming subunit of the V0 complex of vacuolar(H+)-ATPase (V-ATPase), a multisubunit enzyme composed of a peripheral complex (V1) that hydrolyzes ATP and a membrane integral complex (V0) that translocates protons. V-ATPase is responsible for acidifying and maintaining the pH of intracellular compartments and in some cell types, is targeted to the plasma membrane, where it is responsible for acidifying the extracellular environment. The polypeptide is V-type proton ATPase 16 kDa proteolipid subunit c (Aedes aegypti (Yellowfever mosquito)).